The sequence spans 245 residues: E3 ubiquitin-protein ligase RNF138 (245 aa).

An RING-type zinc finger spans residues 18–58 (CPVCQEVLKTPVRTAACQHVFCRKCFLTAMRESGIHCPLCR). Zn(2+) is bound by residues Cys86, Cys89, His101, and Cys105. A C2HC RNF-type zinc finger spans residues 86–105 (CRCCSKKIKFYRMRHHYKSC). A disordered region spans residues 128-154 (VRSSNRSETSASDNTETYQEDTSSSGH). At Thr142 the chain carries Phosphothreonine. C2H2-type zinc fingers lie at residues 157 to 180 (FKCP…NSNH) and 187 to 215 (VTCP…NQRH). The 19-residue stretch at 225–243 (LQLDEETQYQTAVEESFQV) folds into the UIM domain.

Interacts with NLK. Interacts with XRCC5/Ku80. Interacts with RBBP8/CtIP. Auto-ubiquitinated.

The protein localises to the chromosome. The enzyme catalyses S-ubiquitinyl-[E2 ubiquitin-conjugating enzyme]-L-cysteine + [acceptor protein]-L-lysine = [E2 ubiquitin-conjugating enzyme]-L-cysteine + N(6)-ubiquitinyl-[acceptor protein]-L-lysine.. Its pathway is protein modification; protein ubiquitination. Its function is as follows. E3 ubiquitin-protein ligase involved in DNA damage response by promoting DNA resection and homologous recombination. Recruited to sites of double-strand breaks following DNA damage and specifically promotes double-strand break repair via homologous recombination. Two different, non-exclusive, mechanisms have been proposed. According to a report, regulates the choice of double-strand break repair by favoring homologous recombination over non-homologous end joining (NHEJ): acts by mediating ubiquitination of XRCC5/Ku80, leading to remove the Ku complex from DNA breaks, thereby promoting homologous recombination. According to another report, cooperates with UBE2Ds E2 ubiquitin ligases (UBE2D1, UBE2D2, UBE2D3 or UBE2D4) to promote homologous recombination by mediating ubiquitination of RBBP8/CtIP. Together with NLK, involved in the ubiquitination and degradation of TCF/LEF. Also exhibits auto-ubiquitination activity in combination with UBE2K. May act as a negative regulator in the Wnt/beta-catenin-mediated signaling pathway. This Mus musculus (Mouse) protein is E3 ubiquitin-protein ligase RNF138.